A 1303-amino-acid chain; its full sequence is Ninein-like protein (1303 aa).

EF-hand domains are found at residues R8 to D43 and R61 to R77. Residues T107–D135 form a disordered region. EF-hand domains are found at residues V203 to K238 and L240 to H275. Residues D253, D255, D257, K259, and E264 each coordinate Ca(2+). A coiled-coil region spans residues E464–Q590. Over residues S592–E617 the composition is skewed to polar residues. A disordered region spans residues S592–R634. Coiled coils occupy residues E660–E791, L821–R876, and S919–Q1146. Residues E1156–Q1181 are disordered. Residues G1159–E1175 are compositionally biased toward polar residues. A coiled-coil region spans residues Q1202–K1278.

It is found in the cytoplasm. It localises to the cytoskeleton. The protein localises to the microtubule organizing center. Its subcellular location is the centrosome. Its function is as follows. Required for the intracellular transport of organelles and vesicles, and is essential for the photoreceptor's outer segments formation, maintenance and function. In Danio rerio (Zebrafish), this protein is Ninein-like protein (Ninl).